The sequence spans 465 residues: Ribulose bisphosphate carboxylase large chain (465 aa).

An N6,N6,N6-trimethyllysine modification is found at Lys-4. Positions 113 and 163 each coordinate substrate. Catalysis depends on Lys-165, which acts as the Proton acceptor. Substrate is bound at residue Lys-167. 3 residues coordinate Mg(2+): Lys-191, Asp-193, and Glu-194. Lys-191 carries the N6-carboxylysine modification. His-284 acts as the Proton acceptor in catalysis. Residues Arg-285, His-317, and Ser-369 each contribute to the substrate site.

It belongs to the RuBisCO large chain family. Type I subfamily. In terms of assembly, heterohexadecamer of 8 large chains and 8 small chains; disulfide-linked. The disulfide link is formed within the large subunit homodimers. The cofactor is Mg(2+). In terms of processing, the disulfide bond which can form in the large chain dimeric partners within the hexadecamer appears to be associated with oxidative stress and protein turnover.

It is found in the plastid. Its subcellular location is the chloroplast. The enzyme catalyses 2 (2R)-3-phosphoglycerate + 2 H(+) = D-ribulose 1,5-bisphosphate + CO2 + H2O. It catalyses the reaction D-ribulose 1,5-bisphosphate + O2 = 2-phosphoglycolate + (2R)-3-phosphoglycerate + 2 H(+). RuBisCO catalyzes two reactions: the carboxylation of D-ribulose 1,5-bisphosphate, the primary event in carbon dioxide fixation, as well as the oxidative fragmentation of the pentose substrate in the photorespiration process. Both reactions occur simultaneously and in competition at the same active site. The sequence is that of Ribulose bisphosphate carboxylase large chain from Ulmus alata (Winged elm).